The chain runs to 249 residues: NADH-quinone oxidoreductase subunit C (249 aa).

Belongs to the complex I 30 kDa subunit family. NDH-1 is composed of 14 different subunits. Subunits NuoB, C, D, E, F, and G constitute the peripheral sector of the complex.

The protein localises to the cell inner membrane. It carries out the reaction a quinone + NADH + 5 H(+)(in) = a quinol + NAD(+) + 4 H(+)(out). Functionally, NDH-1 shuttles electrons from NADH, via FMN and iron-sulfur (Fe-S) centers, to quinones in the respiratory chain. The immediate electron acceptor for the enzyme in this species is believed to be ubiquinone. Couples the redox reaction to proton translocation (for every two electrons transferred, four hydrogen ions are translocated across the cytoplasmic membrane), and thus conserves the redox energy in a proton gradient. The protein is NADH-quinone oxidoreductase subunit C of Xylella fastidiosa (strain M12).